The sequence spans 129 residues: Histone H2A.J (129 aa).

The disordered stretch occupies residues 1-22 (MSGRGKQGGKVRAKAKSRSSRA). An N6-acetyllysine mark is found at Lys6 and Lys10. Basic residues predominate over residues 7–19 (QGGKVRAKAKSRS). Lys10 is modified (N6-lactoyllysine; alternate). Gln105 bears the N5-methylglutamine mark. Position 121 is a phosphothreonine; by DCAF1 (Thr121).

This sequence belongs to the histone H2A family. As to quaternary structure, the nucleosome is a histone octamer containing two molecules each of H2A, H2B, H3 and H4 assembled in one H3-H4 heterotetramer and two H2A-H2B heterodimers. The octamer wraps approximately 147 bp of DNA. In terms of processing, monoubiquitination of Lys-120 (H2AXK119ub) gives a specific tag for epigenetic transcriptional repression. Following DNA double-strand breaks (DSBs), it is ubiquitinated through 'Lys-63' linkage of ubiquitin moieties. Glutamine methylation at Gln-105 (H2AQ104me) by FBL is specifically dedicated to polymerase I. It is present at 35S ribosomal DNA locus and impairs binding of the FACT complex. Post-translationally, phosphorylation on Ser-2 (H2AS1ph) is enhanced during mitosis. Phosphorylation on Ser-2 by RPS6KA5/MSK1 directly represses transcription. Acetylation of H3 inhibits Ser-2 phosphorylation by RPS6KA5/MSK1. Phosphorylation at Thr-121 (H2AT120ph) by DCAF1 is present in the regulatory region of many tumor suppresor genes and down-regulates their transcription.

Its subcellular location is the nucleus. The protein localises to the chromosome. Its function is as follows. Core component of nucleosome. Nucleosomes wrap and compact DNA into chromatin, limiting DNA accessibility to the cellular machineries which require DNA as a template. Histones thereby play a central role in transcription regulation, DNA repair, DNA replication and chromosomal stability. DNA accessibility is regulated via a complex set of post-translational modifications of histones, also called histone code, and nucleosome remodeling. The polypeptide is Histone H2A.J (Macaca fascicularis (Crab-eating macaque)).